The primary structure comprises 169 residues: Histone H1.9 (169 aa).

2 stretches are compositionally biased toward polar residues: residues 1–10 and 19–36; these read MSLVSPSPDS and DAST…IGPN. Positions 1 to 36 are disordered; that stretch reads MSLVSPSPDSNAVMAGDQDASTSQVPSQSESKIGPN. One can recognise an H15 domain in the interval 43–116; the sequence is RKPTMSKVIL…GASGSFRLGK (74 aa). Residues S62 and S65 each carry the phosphoserine modification. Basic residues predominate over residues 118–142; that stretch reads QAFKSKCKAKRRQRRQKPGQRRTGS. The tract at residues 118 to 154 is disordered; it reads QAFKSKCKAKRRQRRQKPGQRRTGSRRSLLGSKKSNN.

The protein belongs to the histone H1/H5 family.

It is found in the nucleus. Its subcellular location is the chromosome. Functionally, DNA-binding protein that may be implicated in chromatin remodeling and/or transcriptional regulation during spermiogenesis, the process of spermatid maturation into spermatozoa. The protein is Histone H1.9 of Rattus norvegicus (Rat).